Consider the following 60-residue polypeptide: MSEKKTVRVALVRSPIGTRESHRATVRGLGLRKVNSESVLEDTPAVRGMINKISYLVKVL.

The protein belongs to the universal ribosomal protein uL30 family. As to quaternary structure, part of the 50S ribosomal subunit.

The sequence is that of Large ribosomal subunit protein uL30 from Leptothrix cholodnii (strain ATCC 51168 / LMG 8142 / SP-6) (Leptothrix discophora (strain SP-6)).